A 126-amino-acid polypeptide reads, in one-letter code: Small ribosomal subunit protein uS13 (126 aa).

The segment at 95–126 (GMPVRGQRTRTNARTRRGRRGQAIGIKKKVKK) is disordered.

This sequence belongs to the universal ribosomal protein uS13 family. As to quaternary structure, part of the 30S ribosomal subunit. Forms a loose heterodimer with protein S19. Forms two bridges to the 50S subunit in the 70S ribosome.

Functionally, located at the top of the head of the 30S subunit, it contacts several helices of the 16S rRNA. In the 70S ribosome it contacts the 23S rRNA (bridge B1a) and protein L5 of the 50S subunit (bridge B1b), connecting the 2 subunits; these bridges are implicated in subunit movement. Contacts the tRNAs in the A and P-sites. This Chloroflexus aggregans (strain MD-66 / DSM 9485) protein is Small ribosomal subunit protein uS13.